Reading from the N-terminus, the 304-residue chain is Protein Largen (304 aa).

The span at methionine 1–serine 22 shows a compositional bias: low complexity. Disordered stretches follow at residues methionine 1 to lysine 27, glutamine 66 to histidine 109, leucine 114 to arginine 133, and glutamate 236 to valine 304. Residues isoleucine 33 to glutamate 70 adopt a coiled-coil conformation. Residues threonine 77–serine 91 show a composition bias toward low complexity. Pro residues-rich tracts occupy residues proline 120–leucine 129 and phenylalanine 275–proline 289.

In terms of biological role, regulator of cell size that promotes cell size increase independently of mTOR and Hippo signaling pathways. Acts by stimulating the translation of specific mRNAs, including those encoding proteins affecting mitochondrial functions. Increases mitochondrial mass and respiration. In Mus musculus (Mouse), this protein is Protein Largen (Prr16).